Here is a 447-residue protein sequence, read N- to C-terminus: Tubulin beta-4 chain (447 aa).

Positions 11, 71, 140, 144, 145, 146, 206, and 228 each coordinate GTP. Glu71 contributes to the Mg(2+) binding site. Residues 428-447 form a disordered region; it reads QDATAEEYEEEEHDGEEEHA. Residues 431–447 show a composition bias toward acidic residues; sequence TAEEYEEEEHDGEEEHA.

It belongs to the tubulin family. As to quaternary structure, dimer of alpha and beta chains. A typical microtubule is a hollow water-filled tube with an outer diameter of 25 nm and an inner diameter of 15 nM. Alpha-beta heterodimers associate head-to-tail to form protofilaments running lengthwise along the microtubule wall with the beta-tubulin subunit facing the microtubule plus end conferring a structural polarity. Microtubules usually have 13 protofilaments but different protofilament numbers can be found in some organisms and specialized cells. The cofactor is Mg(2+).

The protein resides in the cytoplasm. Its subcellular location is the cytoskeleton. In terms of biological role, tubulin is the major constituent of microtubules, a cylinder consisting of laterally associated linear protofilaments composed of alpha- and beta-tubulin heterodimers. Microtubules grow by the addition of GTP-tubulin dimers to the microtubule end, where a stabilizing cap forms. Below the cap, tubulin dimers are in GDP-bound state, owing to GTPase activity of alpha-tubulin. The protein is Tubulin beta-4 chain (TUBB4) of Zea mays (Maize).